A 283-amino-acid chain; its full sequence is Heavy metal-associated isoprenylated plant protein 3 (283 aa).

Positions 1–22 (MGEKKNEGDNKKKGGDNKKKNE) are enriched in basic and acidic residues. The segment at 1-26 (MGEKKNEGDNKKKGGDNKKKNETPSI) is disordered. 2 consecutive HMA domains span residues 25-88 (SITV…KKKV) and 132-195 (VTTA…KRAV). Positions 36 and 39 each coordinate Zn(2+). Residues 82–129 (EKTKKKVDLVSPQPKKEKEKENKNKNDEDKKKSEEKKKPDNNDKKPKE) are compositionally biased toward basic and acidic residues. Positions 82–131 (EKTKKKVDLVSPQPKKEKEKENKNKNDEDKKKSEEKKKPDNNDKKPKETP) are disordered. Zn(2+) is bound by residues C143 and C146. The segment covering 198-230 (VPPKKEKDKENGNENGEKKKGGGGDGGGKEKTG) has biased composition (basic and acidic residues). Residues 198-238 (VPPKKEKDKENGNENGEKKKGGGGDGGGKEKTGNKGGGEGV) form a disordered region. C280 is subject to Cysteine methyl ester. C280 carries the S-farnesyl cysteine lipid modification. A propeptide spans 281 to 283 (VVM) (removed in mature form).

Belongs to the HIPP family.

The protein resides in the nucleus. Its subcellular location is the nucleolus. It is found in the cytoplasm. Its function is as follows. Heavy-metal-binding protein. Binds high amounts of zinc. May act as an upstream regulator of the salicylate-dependent pathogen response. Involved in abiotic stress responses, and seed and flower development. This is Heavy metal-associated isoprenylated plant protein 3 from Arabidopsis thaliana (Mouse-ear cress).